The following is a 545-amino-acid chain: Chaperonin GroEL 4 (545 aa).

ATP contacts are provided by residues 30–33, lysine 51, 87–91, glycine 415, and aspartate 495; these read TLGP and DGTTT.

Belongs to the chaperonin (HSP60) family. In terms of assembly, forms a cylinder of 14 subunits composed of two heptameric rings stacked back-to-back. Interacts with the co-chaperonin GroES.

The protein resides in the cytoplasm. The catalysed reaction is ATP + H2O + a folded polypeptide = ADP + phosphate + an unfolded polypeptide.. Its function is as follows. Together with its co-chaperonin GroES, plays an essential role in assisting protein folding. The GroEL-GroES system forms a nano-cage that allows encapsulation of the non-native substrate proteins and provides a physical environment optimized to promote and accelerate protein folding. In Rhizobium meliloti (strain 1021) (Ensifer meliloti), this protein is Chaperonin GroEL 4.